The chain runs to 1141 residues: Myosin-binding protein C, slow-type (1141 aa).

The span at M1 to N10 shows a compositional bias: basic and acidic residues. The interval M1–N51 is disordered. Ig-like C2-type domains are found at residues G72–V144, S251–P340, P341–K431, P432–D520, and P522–F619. T406 is subject to Phosphothreonine. S611 carries the post-translational modification Phosphoserine. Fibronectin type-III domains lie at P622–P721 and T722–I833. T798 is subject to Phosphothreonine. Y823 bears the Phosphotyrosine mark. The Ig-like C2-type 6 domain occupies P837–R931. A Fibronectin type-III 3 domain is found at P934–D1029. Residues P1047 to Q1141 form the Ig-like C2-type 7 domain.

The protein belongs to the immunoglobulin superfamily. MyBP family. In terms of assembly, interacts with USP25 (isoform USP25m only); the interaction prevents proteasomal degradation of MYBPC1.

Thick filament-associated protein located in the crossbridge region of vertebrate striated muscle a bands. Slow skeletal protein that binds to both myosin and actin. In vitro, binds to native thin filaments and modifies the activity of actin-activated myosin ATPase. May modulate muscle contraction or may play a more structural role. This Homo sapiens (Human) protein is Myosin-binding protein C, slow-type (MYBPC1).